Reading from the N-terminus, the 2587-residue chain is MAAFLVMFIFTIALFVALLWVFFKSLPWILRHSAGITLSFQFDGWNCLKDVALQFKKGSIESIVIGEFKANLSQSLVELCATAFIQDPKVIFSICDLKIVTRPSHSSKGPRKPKTRKSSSGGKGKLMLFANIGRFFSVSMTNMVVQTPKATAEIKELELDLSKDRGSGNFFMKLYLLPIFVQIGEPHVTSTHSPEMDSDICLARQTPSKTAEGSSSSSFHCEKISLSCEFGPNRKSSPSIKNVEVDLANAVLNLNEKLLLKNKSSTSAASKGEVIDSSSGNTTSEKPPKQPMNVLVAKHASKFPEKVLFDLTKLEIRFVHQEHDFSIANSIKGFQLRSAKSQSGEDGKEDTCLDFAMELQEMHLFRESEVSVLEMTKFGVFTKVYCPIQESLPVRAEVEIKLGGIMSNIIMTRFEPLLRLHFSRKKKMVLKEERPTIAKSETTGFKAVVWKCATSAPDVTVVLYNPGGSPIYQCGLDSFQATANNMSNRGTVVQMELNELTLCMVDEHKGCLKESLFGLESDPGSLINIRKVRSEWGKKEVLPEGDGSKGKQTLVVDVSEIGLLFSFRSVEALTVNAISSQAYIKSLTGSSSKNKQEKGAHRSKPPSGRGTQLLKLNVERFSLNFAGDSSLENTVIDDPKRVNYGSQGGRIIISVSADGSPRTASVFSTLSEEHEKLKYIISFEILKFGFTLNKEIQSTQVELETAKAIYQEFLEEPHQVSRVTLCDIQNAKFVRRIGGGKEVSICSLFSASNIAVRWEPDVHISMVELGLRLKSLVLTQKLKQHGNRNPEEASTVTGDKQKEEPTTTPNSLDKKKKKESIFAVDVEMLSITAEAGDGVEAEVQIQSIFSENVGIGVLLEGFMLGFCGCRIVKSSRVQISRIPSMPSTSSSVTPATGGTPWDWIVQGVDIHICMPFRLQLRAIDDAVEEMLRALKLVTNAKTKLIFPIKKESSTPKKPGSKKVGRIRFGIRKLIFDIEEEPLQGWLDEHYHLMRKEAYELAIRSKFLDELMSSGNQVPKTGGDESDGEKKISFEGEEIDPQDPAIIQMMNEKLYKQSFSSYYKSCQSLRLSDGSGACKEGFQAGFKMSTSRTSLLSVSVTDLDLSLTAIGGGEAGMIEIVKKLDPVAEEKDIPFSRLYGSNLRLNTGTLAVQIRNYTFPLLSTAFGKCEGCLVLAQQATAFQPQIIHDVYIGRWRKVQMLRSASGTTPAMKTYLDLPIKFQKGEISFGIGYEPVLADISYAFTVALRRANLSLKGPGLLQPPKKEKSLPWWDEMRNYVHGNVTLSFSETKWIVLGSPDPYEKLDKLHMTSGSVEIQQYDGRVHFSAEDIKIFFSSFEGLARHYPNSPVCPSSYPFLEVPRFSLEVRMDWECESGSPLNHYLFALPIEGKARDKIYDPFRSTSLSLRWDFTLRPENPSVSAVDQTKKVGSECKPEKSSFSPPTINIGAHDLAWLIRFWNMNYLPPYKLRTFSRWPRFGVPRIPRSGNLSLDRVMTEYNLRLDVTPICIKHMTLDSNNPAKGLTFDMTKLKYEICFSRGNQDFTFECKRETLDPVYQGIDLHLPKAFLRRDQHCSKPAQMSRTSSLSGSTDRVTSDNGTSTSDGTEKHPDDGFLFSSDYFTIRRQAPKADPERLMVWKEEGKIYREKVDARSTKEKQSEPEENSHSDPSDDDGYNVVIADNCQRIFVYGLKLLWNIENRDAVLSFAGGMSKAFQPPKPSPSRQYAQRKLLEGNQKHSESEVSQDEPTKQPSTGSGNLASQSKEPAEVLSPSSEPIKTENFASFPLGATKTGDSNDPEEEGTRHFMVNVVEPQFNLHSEDINGRFLLAAASGRVLARSFHSVVHVAYDMIEKAAQNENDHNPENGTDMTWTRMEVSMMLEHVQAHVAPTDVDPGAGVQWLPKIRRSSPKAKRTGALLERVFMPCDMYFQYTRHKGVTPDLKVKPLKELTFNSRNITASMTSRQFQVMTDVLSNLLFARLPKAHNDSLKLSGEEDDEVEEEIDEVVPDGIEEVELAKIELEAKERDRMMLLDDIRKLTQNESNSGNINLEKESDFWMISGGRPVLVERLRKAYLSVQQSRKTAYTALRTSVKNAAELRLLEKDKNKRPSSAMRISLQINKVIWSMVLDGKTFAEVEIDNMIYDFNRDYRDIGIAQFTTRYVVLRNCLPNAKCDTVLSAWNPPPEWGKKVMLQVDARQGAPKDGQAPYELFQVEIYPLKIHLTETMYTMMWEYIFPGEEQHSQRREEVWKVSTTSGSRRRKGSFAQEAAALLAASDLGQGSKNQSLKSSTIRGSGRELRRTSSFDRSWEETVAESVATELVLSSMEHQGESSKGKLKDSKTSKAGGRSVHEEKKGEKSLEDKKSRPQKIMQFQTIKISQVELLITYEGSRFVVNDMKLCMDTFHRVEFSGTWRRLFSRVKKHIIWGVLKSVTGMQMKKFKDKAHVPKDDIGLRDKDESGRTDQESGAWVKRPGDNAGDGFVTSIRGIFNTQRRKAKKFVLRTMRGEAEDNFPGEWSDNESDFSPFARQLTITKAKKLIRRHSKKFQNQNTTKGSKKTQLSPTLSPPKEEDQYESDSSSGSSAYEEFLDQNQI.

The N-terminal stretch at 1-27 (MAAFLVMFIFTIALFVALLWVFFKSLP) is a signal peptide. An N-linked (GlcNAc...) asparagine glycan is attached at Asn71. Residues 103–124 (PSHSSKGPRKPKTRKSSSGGKG) are disordered. A compositionally biased stretch (basic residues) spans 108-117 (KGPRKPKTRK). Residues Asn262, Asn281, and Asn485 are each glycosylated (N-linked (GlcNAc...) asparagine). The disordered stretch occupies residues 270–290 (SKGEVIDSSSGNTTSEKPPKQ). Over residues 276–285 (DSSSGNTTSE) the composition is skewed to polar residues. Positions 589-611 (GSSSKNKQEKGAHRSKPPSGRGT) are disordered. Positions 691 to 716 (TLNKEIQSTQVELETAKAIYQEFLEE) form a coiled coil. The disordered stretch occupies residues 784 to 814 (QHGNRNPEEASTVTGDKQKEEPTTTPNSLDK). N-linked (GlcNAc...) asparagine glycosylation is found at Asn1155, Asn1250, Asn1281, and Asn1486. 3 disordered regions span residues 1571–1608 (HCSK…KHPD), 1646–1673 (VDAR…DGYN), and 1729–1797 (EGNQ…PEEE). The span at 1576-1590 (AQMSRTSSLSGSTDR) shows a compositional bias: polar residues. Asn1595 is a glycosylation site (N-linked (GlcNAc...) asparagine). Positions 1646 to 1666 (VDARSTKEKQSEPEENSHSDP) are enriched in basic and acidic residues. Residues 1746-1760 (KQPSTGSGNLASQSK) are compositionally biased toward polar residues. Asn1861, Asn1951, Asn1981, Asn2036, and Asn2278 each carry an N-linked (GlcNAc...) asparagine glycan. A coiled-coil region spans residues 2006–2036 (IEEVELAKIELEAKERDRMMLLDDIRKLTQN). The segment covering 2274–2287 (QGSKNQSLKSSTIR) has biased composition (polar residues). Disordered regions lie at residues 2274 to 2299 (QGSK…TSSF), 2319 to 2360 (SMEH…KKSR), and 2442 to 2469 (KDDI…RPGD). 4 stretches are compositionally biased toward basic and acidic residues: residues 2289–2299 (SGRELRRTSSF), 2322–2336 (HQGE…DSKT), 2343–2359 (SVHE…DKKS), and 2442–2458 (KDDI…RTDQ). N-linked (GlcNAc...) asparagine glycosylation is found at Asn2513 and Asn2544. The disordered stretch occupies residues 2533-2587 (IRRHSKKFQNQNTTKGSKKTQLSPTLSPPKEEDQYESDSSSGSSAYEEFLDQNQI). Polar residues predominate over residues 2540-2557 (FQNQNTTKGSKKTQLSPT). Residues 2569–2579 (SDSSSGSSAYE) show a composition bias toward low complexity.

This sequence belongs to the SABRE family. Mostly expressed in pollen and roots, especially in tip-growing cells, but also present in seedlings, stems, leaves, buds, flowers, siliques and seeds.

It localises to the secreted. Its subcellular location is the golgi apparatus. Functionally, may be involved in membrane trafficking. Required for tip growth in pollen tubes and root hairs. The sequence is that of Protein KINKY POLLEN from Arabidopsis thaliana (Mouse-ear cress).